Reading from the N-terminus, the 465-residue chain is Flavin-containing monooxygenase FMO GS-OX-like 2 (465 aa).

Residue 18-23 participates in FAD binding; it reads GAGAAG. 217-222 provides a ligand contact to NADP(+); the sequence is GSSASG.

This sequence belongs to the FMO family. The cofactor is FAD.

Its function is as follows. Catalyzes the conversion of methylthioalkyl glucosinolates of any chain length into methylsulfinylalkyl glucosinolates. The sequence is that of Flavin-containing monooxygenase FMO GS-OX-like 2 from Arabidopsis thaliana (Mouse-ear cress).